A 177-amino-acid chain; its full sequence is MALNLSQKQEVVAELADVAAKAHSLIAAEYAGTTVSQMTAMRKQARETGVFLKVVKNTLAARAVEGTDFAVAADKLVGPLLYAFSMEEPGAAGRLIKEFAKSNDKLQAKVVSIGGELFPAGHVDVLASLPTRDQALAMLARVLSEPAAMFARAVKAVGDKQGGGDAAAAAVAETAEA.

The protein belongs to the universal ribosomal protein uL10 family. In terms of assembly, part of the ribosomal stalk of the 50S ribosomal subunit. The N-terminus interacts with L11 and the large rRNA to form the base of the stalk. The C-terminus forms an elongated spine to which L12 dimers bind in a sequential fashion forming a multimeric L10(L12)X complex.

Functionally, forms part of the ribosomal stalk, playing a central role in the interaction of the ribosome with GTP-bound translation factors. This chain is Large ribosomal subunit protein uL10, found in Xanthomonas oryzae pv. oryzae (strain MAFF 311018).